A 303-amino-acid chain; its full sequence is Aspartate carbamoyltransferase catalytic subunit (303 aa).

2 residues coordinate carbamoyl phosphate: Arg-49 and Thr-50. Lys-77 is an L-aspartate binding site. Positions 99, 126, and 129 each coordinate carbamoyl phosphate. Arg-159 and Arg-211 together coordinate L-aspartate. 2 residues coordinate carbamoyl phosphate: Ser-252 and Pro-253.

It belongs to the aspartate/ornithine carbamoyltransferase superfamily. ATCase family. Heterododecamer (2C3:3R2) of six catalytic PyrB chains organized as two trimers (C3), and six regulatory PyrI chains organized as three dimers (R2).

It catalyses the reaction carbamoyl phosphate + L-aspartate = N-carbamoyl-L-aspartate + phosphate + H(+). Its pathway is pyrimidine metabolism; UMP biosynthesis via de novo pathway; (S)-dihydroorotate from bicarbonate: step 2/3. Its function is as follows. Catalyzes the condensation of carbamoyl phosphate and aspartate to form carbamoyl aspartate and inorganic phosphate, the committed step in the de novo pyrimidine nucleotide biosynthesis pathway. This chain is Aspartate carbamoyltransferase catalytic subunit, found in Listeria monocytogenes serovar 1/2a (strain ATCC BAA-679 / EGD-e).